A 279-amino-acid chain; its full sequence is Large ribosomal subunit protein uL3 (279 aa).

An N5-methylglutamine modification is found at glutamine 151.

Belongs to the universal ribosomal protein uL3 family. Part of the 50S ribosomal subunit. Forms a cluster with proteins L14 and L19. Methylated by PrmB.

In terms of biological role, one of the primary rRNA binding proteins, it binds directly near the 3'-end of the 23S rRNA, where it nucleates assembly of the 50S subunit. In Dinoroseobacter shibae (strain DSM 16493 / NCIMB 14021 / DFL 12), this protein is Large ribosomal subunit protein uL3.